The following is a 131-amino-acid chain: D-ribose pyranase (131 aa).

His-20 serves as the catalytic Proton donor. Substrate contacts are provided by residues Asp-28, His-98, and 120-122; that span reads YAN.

Belongs to the RbsD / FucU family. RbsD subfamily. In terms of assembly, homodecamer.

The protein resides in the cytoplasm. The catalysed reaction is beta-D-ribopyranose = beta-D-ribofuranose. It participates in carbohydrate metabolism; D-ribose degradation; D-ribose 5-phosphate from beta-D-ribopyranose: step 1/2. In terms of biological role, catalyzes the interconversion of beta-pyran and beta-furan forms of D-ribose. This chain is D-ribose pyranase, found in Symbiobacterium thermophilum (strain DSM 24528 / JCM 14929 / IAM 14863 / T).